A 262-amino-acid chain; its full sequence is Glutamate racemase (262 aa).

Substrate contacts are provided by residues 5-6 (DS) and 37-38 (YG). C69 (proton donor/acceptor) is an active-site residue. 70 to 71 (NT) contributes to the substrate binding site. Catalysis depends on C181, which acts as the Proton donor/acceptor. Residue 182–183 (TH) participates in substrate binding.

Belongs to the aspartate/glutamate racemases family.

The catalysed reaction is L-glutamate = D-glutamate. It participates in cell wall biogenesis; peptidoglycan biosynthesis. Functionally, provides the (R)-glutamate required for cell wall biosynthesis. The chain is Glutamate racemase from Buchnera aphidicola subsp. Acyrthosiphon pisum (strain Tuc7).